A 275-amino-acid chain; its full sequence is MWRAGSMSAELGVGCALRAVNERVQQAVARRPRDLPAIQPRLVAVSKTKPADMVIEAYGHGQRTFGENYVQELLEKASNPKILSLCPEIKWHFIGHLQKQNVNKLMAVPNLFMLETVDSVKLADKVNSSWQRKGSPERLKVMVQINTSGEESKHGLPPSETIAIVEHINAKCPNLEFVGLMTIGSFGHDLSQGPNPDFQLLLSLREELCKKLNIPADQVELSMGMSADFQHAVEVGSTNVRIGSTIFGERDYSKKPTPDKCAADVKAPLEVAQEH.

Ser-6 bears the Phosphoserine mark. Lys-47 carries the N6-(pyridoxal phosphate)lysine modification. Tyr-69 carries the post-translational modification Phosphotyrosine. N6-succinyllysine is present on Lys-125. A phosphoserine mark is found at Ser-226 and Ser-244. Basic and acidic residues predominate over residues 251-263 (DYSKKPTPDKCAA). The tract at residues 251–275 (DYSKKPTPDKCAADVKAPLEVAQEH) is disordered.

The protein belongs to the pyridoxal phosphate-binding protein YggS/PROSC family. As to expression, ubiquitous.

In terms of biological role, pyridoxal 5'-phosphate (PLP)-binding protein, which may be involved in intracellular homeostatic regulation of pyridoxal 5'-phosphate (PLP), the active form of vitamin B6. The protein is Pyridoxal phosphate homeostasis protein of Homo sapiens (Human).